We begin with the raw amino-acid sequence, 224 residues long: Cytidylate kinase (224 aa).

11-19 (GPASAGKST) serves as a coordination point for ATP.

It belongs to the cytidylate kinase family. Type 1 subfamily.

The protein localises to the cytoplasm. The enzyme catalyses CMP + ATP = CDP + ADP. It carries out the reaction dCMP + ATP = dCDP + ADP. This Ligilactobacillus salivarius (strain UCC118) (Lactobacillus salivarius) protein is Cytidylate kinase.